The primary structure comprises 60 residues: Putative transmembrane protein 74 (60 aa).

2 consecutive transmembrane segments (helical) span residues 4-24 (FSVI…FLTF) and 35-55 (WVYI…YQAG).

It localises to the host membrane. The sequence is that of Putative transmembrane protein 74 (SIFV0074) from Sulfolobus islandicus filamentous virus (isolate Iceland/Hveragerdi) (SIFV).